The sequence spans 252 residues: Phosphoglycolate phosphatase (252 aa).

Asp-13 functions as the Nucleophile in the catalytic mechanism. Asp-13, Asp-15, and Asp-192 together coordinate Mg(2+).

This sequence belongs to the HAD-like hydrolase superfamily. CbbY/CbbZ/Gph/YieH family. In terms of assembly, monomer. Mg(2+) serves as cofactor. Chloride is required as a cofactor.

It catalyses the reaction 2-phosphoglycolate + H2O = glycolate + phosphate. Its pathway is organic acid metabolism; glycolate biosynthesis; glycolate from 2-phosphoglycolate: step 1/1. Its function is as follows. Specifically catalyzes the dephosphorylation of 2-phosphoglycolate. Is involved in the dissimilation of the intracellular 2-phosphoglycolate formed during the DNA repair of 3'-phosphoglycolate ends, a major class of DNA lesions induced by oxidative stress. This Salmonella paratyphi A (strain ATCC 9150 / SARB42) protein is Phosphoglycolate phosphatase.